We begin with the raw amino-acid sequence, 884 residues long: Alanine--tRNA ligase (884 aa).

Histidine 565, histidine 569, cysteine 674, and histidine 678 together coordinate Zn(2+).

The protein belongs to the class-II aminoacyl-tRNA synthetase family. Requires Zn(2+) as cofactor.

Its subcellular location is the cytoplasm. It carries out the reaction tRNA(Ala) + L-alanine + ATP = L-alanyl-tRNA(Ala) + AMP + diphosphate. Its function is as follows. Catalyzes the attachment of alanine to tRNA(Ala) in a two-step reaction: alanine is first activated by ATP to form Ala-AMP and then transferred to the acceptor end of tRNA(Ala). Also edits incorrectly charged Ser-tRNA(Ala) and Gly-tRNA(Ala) via its editing domain. In Xanthobacter autotrophicus (strain ATCC BAA-1158 / Py2), this protein is Alanine--tRNA ligase.